Consider the following 371-residue polypeptide: Bifunctional enzyme IspD/IspF (371 aa).

The segment at M1–I210 is 2-C-methyl-D-erythritol 4-phosphate cytidylyltransferase. The 2-C-methyl-D-erythritol 2,4-cyclodiphosphate synthase stretch occupies residues F211 to L371. The a divalent metal cation site is built by D217 and H219. Residues D217–H219 and H243–S244 each bind 4-CDP-2-C-methyl-D-erythritol 2-phosphate. An a divalent metal cation-binding site is contributed by H251. 4-CDP-2-C-methyl-D-erythritol 2-phosphate is bound by residues D265–G267, Y270–D274, T341–E344, F348, and R351.

In the N-terminal section; belongs to the IspD/TarI cytidylyltransferase family. IspD subfamily. The protein in the C-terminal section; belongs to the IspF family. Requires a divalent metal cation as cofactor.

The catalysed reaction is 2-C-methyl-D-erythritol 4-phosphate + CTP + H(+) = 4-CDP-2-C-methyl-D-erythritol + diphosphate. It catalyses the reaction 4-CDP-2-C-methyl-D-erythritol 2-phosphate = 2-C-methyl-D-erythritol 2,4-cyclic diphosphate + CMP. It participates in isoprenoid biosynthesis; isopentenyl diphosphate biosynthesis via DXP pathway; isopentenyl diphosphate from 1-deoxy-D-xylulose 5-phosphate: step 2/6. The protein operates within isoprenoid biosynthesis; isopentenyl diphosphate biosynthesis via DXP pathway; isopentenyl diphosphate from 1-deoxy-D-xylulose 5-phosphate: step 4/6. Its function is as follows. Bifunctional enzyme that catalyzes the formation of 4-diphosphocytidyl-2-C-methyl-D-erythritol from CTP and 2-C-methyl-D-erythritol 4-phosphate (MEP) (IspD), and catalyzes the conversion of 4-diphosphocytidyl-2-C-methyl-D-erythritol 2-phosphate (CDP-ME2P) to 2-C-methyl-D-erythritol 2,4-cyclodiphosphate (ME-CPP) with a corresponding release of cytidine 5-monophosphate (CMP) (IspF). In Campylobacter jejuni subsp. doylei (strain ATCC BAA-1458 / RM4099 / 269.97), this protein is Bifunctional enzyme IspD/IspF.